A 492-amino-acid polypeptide reads, in one-letter code: Trigger factor (492 aa).

A disordered region spans residues 77 to 96; sequence EILSSRGEKSATQPAISMTE. One can recognise a PPIase FKBP-type domain in the interval 169-254; it reads GDRVTMNYLG…VKEVAAAAAV (86 aa). Positions 439–492 are disordered; it reads ELLADDGEEETETKKKAPAKKKAAAKADDAAEGEEAAPKKKAPAKKKATEADAE.

This sequence belongs to the FKBP-type PPIase family. Tig subfamily.

It localises to the cytoplasm. The enzyme catalyses [protein]-peptidylproline (omega=180) = [protein]-peptidylproline (omega=0). In terms of biological role, involved in protein export. Acts as a chaperone by maintaining the newly synthesized protein in an open conformation. Functions as a peptidyl-prolyl cis-trans isomerase. The protein is Trigger factor of Agrobacterium fabrum (strain C58 / ATCC 33970) (Agrobacterium tumefaciens (strain C58)).